The chain runs to 309 residues: Homoserine kinase (309 aa).

Proline 91–cysteine 101 contributes to the ATP binding site.

This sequence belongs to the GHMP kinase family. Homoserine kinase subfamily.

It is found in the cytoplasm. It carries out the reaction L-homoserine + ATP = O-phospho-L-homoserine + ADP + H(+). It participates in amino-acid biosynthesis; L-threonine biosynthesis; L-threonine from L-aspartate: step 4/5. Catalyzes the ATP-dependent phosphorylation of L-homoserine to L-homoserine phosphate. This Photorhabdus laumondii subsp. laumondii (strain DSM 15139 / CIP 105565 / TT01) (Photorhabdus luminescens subsp. laumondii) protein is Homoserine kinase.